We begin with the raw amino-acid sequence, 142 residues long: Large ribosomal subunit protein uL11 (142 aa).

Belongs to the universal ribosomal protein uL11 family. In terms of assembly, part of the ribosomal stalk of the 50S ribosomal subunit. Interacts with L10 and the large rRNA to form the base of the stalk. L10 forms an elongated spine to which L12 dimers bind in a sequential fashion forming a multimeric L10(L12)X complex. One or more lysine residues are methylated.

Functionally, forms part of the ribosomal stalk which helps the ribosome interact with GTP-bound translation factors. This is Large ribosomal subunit protein uL11 from Dictyoglomus turgidum (strain DSM 6724 / Z-1310).